We begin with the raw amino-acid sequence, 496 residues long: probable leucine aminopeptidase 2 (496 aa).

An N-terminal signal peptide occupies residues 1-16; it reads MRSLLWASLLSGVLAG. Positions 111 to 205 constitute a PA domain; sequence PSVEVTADVA…SLEDGQKLIK (95 aa). N-linked (GlcNAc...) asparagine glycosylation is present at Asn224. Zn(2+) contacts are provided by His248 and Asp260. Glu292 serves as the catalytic Proton acceptor. Glu293 lines the Zn(2+) pocket. Residue Asn307 is glycosylated (N-linked (GlcNAc...) asparagine). Asp321 is a Zn(2+) binding site. N-linked (GlcNAc...) asparagine glycosylation is found at Asn341 and Asn402. His419 lines the Zn(2+) pocket. Residues Asn424 and Asn458 are each glycosylated (N-linked (GlcNAc...) asparagine). Residues 475–496 are disordered; that stretch reads KRAPKTHAHVSGSGCWHSQVEA.

The protein belongs to the peptidase M28 family. M28A subfamily. As to quaternary structure, monomer. The cofactor is Zn(2+).

It is found in the secreted. Its function is as follows. Extracellular aminopeptidase that releases a wide variety of amino acids from natural peptides. The sequence is that of probable leucine aminopeptidase 2 (lap2) from Aspergillus oryzae (strain ATCC 42149 / RIB 40) (Yellow koji mold).